Reading from the N-terminus, the 187-residue chain is Pyridoxal 5'-phosphate synthase subunit PdxT (187 aa).

47–49 is a binding site for L-glutamine; that stretch reads GES. Catalysis depends on Cys76, which acts as the Nucleophile. L-glutamine contacts are provided by residues Arg102 and 128 to 129; that span reads IR. Catalysis depends on charge relay system residues His165 and Glu167.

This sequence belongs to the glutaminase PdxT/SNO family. As to quaternary structure, in the presence of PdxS, forms a dodecamer of heterodimers. Only shows activity in the heterodimer.

The enzyme catalyses aldehydo-D-ribose 5-phosphate + D-glyceraldehyde 3-phosphate + L-glutamine = pyridoxal 5'-phosphate + L-glutamate + phosphate + 3 H2O + H(+). It carries out the reaction L-glutamine + H2O = L-glutamate + NH4(+). It functions in the pathway cofactor biosynthesis; pyridoxal 5'-phosphate biosynthesis. Catalyzes the hydrolysis of glutamine to glutamate and ammonia as part of the biosynthesis of pyridoxal 5'-phosphate. The resulting ammonia molecule is channeled to the active site of PdxS. The polypeptide is Pyridoxal 5'-phosphate synthase subunit PdxT (Methanococcus maripaludis (strain C5 / ATCC BAA-1333)).